We begin with the raw amino-acid sequence, 627 residues long: 1-deoxy-D-xylulose-5-phosphate synthase (627 aa).

Thiamine diphosphate contacts are provided by residues histidine 72 and glycine 113 to serine 115. Aspartate 144 contacts Mg(2+). Residues glycine 145–alanine 146, asparagine 173, tyrosine 283, and glutamate 366 contribute to the thiamine diphosphate site. Asparagine 173 lines the Mg(2+) pocket.

This sequence belongs to the transketolase family. DXPS subfamily. In terms of assembly, homodimer. Mg(2+) serves as cofactor. It depends on thiamine diphosphate as a cofactor.

It carries out the reaction D-glyceraldehyde 3-phosphate + pyruvate + H(+) = 1-deoxy-D-xylulose 5-phosphate + CO2. It participates in metabolic intermediate biosynthesis; 1-deoxy-D-xylulose 5-phosphate biosynthesis; 1-deoxy-D-xylulose 5-phosphate from D-glyceraldehyde 3-phosphate and pyruvate: step 1/1. Catalyzes the acyloin condensation reaction between C atoms 2 and 3 of pyruvate and glyceraldehyde 3-phosphate to yield 1-deoxy-D-xylulose-5-phosphate (DXP). This chain is 1-deoxy-D-xylulose-5-phosphate synthase, found in Macrococcus caseolyticus (strain JCSC5402) (Macrococcoides caseolyticum).